A 452-amino-acid chain; its full sequence is GTPase Der (452 aa).

2 consecutive EngA-type G domains span residues 4–169 (PVVA…PPAA) and 177–352 (IKVA…ESHR). GTP is bound by residues 10-17 (GRPNVGKS), 57-61 (DTGGL), 120-123 (NKCE), 183-190 (GRPNVGKS), 230-234 (DTAGI), and 295-298 (NKWD). In terms of domain architecture, KH-like spans 353–438 (RRVSTSVIND…PIRLIWRGKP (86 aa)).

The protein belongs to the TRAFAC class TrmE-Era-EngA-EngB-Septin-like GTPase superfamily. EngA (Der) GTPase family. As to quaternary structure, associates with the 50S ribosomal subunit.

GTPase that plays an essential role in the late steps of ribosome biogenesis. The sequence is that of GTPase Der from Microcystis aeruginosa (strain NIES-843 / IAM M-2473).